Consider the following 335-residue polypeptide: Nuclear distribution protein nudE homolog 1 (335 aa).

The self-association stretch occupies residues 1-93; it reads MEDSGKTFSS…VQHSEGYRQI (93 aa). Residues 18–188 adopt a coiled-coil conformation; that stretch reads WKDLAMTYKQ…ELAVQQKQEK (171 aa). Positions 88-156 are interaction with PAFAH1B1; it reads EGYRQISALE…ERNAFLESEL (69 aa). Positions 167–290 are interaction with CENPF; it reads QRLKDEARDL…QSPNRTGGPA (124 aa). Positions 181–246 are disordered; that stretch reads AVQQKQEKPR…DDSTGGTPLT (66 aa). Residues 204–214 show a composition bias toward polar residues; that stretch reads TAVQATGSVPS. The residue at position 211 (Ser-211) is a Phosphoserine. Thr-215 and Thr-228 each carry phosphothreonine. Phosphoserine is present on residues Ser-231 and Ser-239. A phosphothreonine mark is found at Thr-243 and Thr-246. Cys-274 carries the S-palmitoyl cysteine; by ZDHHC2, ZDHHC3 and ZDHHC7 lipid modification. The tract at residues 279–335 is disordered; sequence YDQSPNRTGGPASGRSSKNRDGGERRPSSTSVPLGDKGLDTSCRWLSKSTTRSSSSC. Ser-282 carries the phosphoserine modification. Positions 296–305 are enriched in basic and acidic residues; sequence KNRDGGERRP. Ser-309 carries the post-translational modification Phosphoserine. Low complexity predominate over residues 325 to 335; it reads SKSTTRSSSSC.

This sequence belongs to the nudE family. As to quaternary structure, homodimer. Interacts with CNTRL, LIS1, dynein, SLMAP and TCP1. Interacts with CENPF, dynactin, tubulin gamma, PAFAH1B1, PCM1 and PCNT. Interacts with ZNF365. Interacts with GTP-bound RAB9A and RAB9B; the interaction leads to RAB9-dynein motor tethering. Interacts (via C-terminus) with MCRS1 (via C-terminus); phosphorylation of NDE1 inhibits the interaction. In terms of processing, phosphorylated in mitosis. Phosphorylated in vitro by CDC2. Phosphorylation at Thr-246 is essential for the G2/M transition. As to expression, expressed in the neuroepithelium throughout the developing brain, including the cerebral cortex and cerebellum.

The protein localises to the cytoplasm. It localises to the cytoskeleton. The protein resides in the microtubule organizing center. Its subcellular location is the centrosome. It is found in the chromosome. The protein localises to the centromere. It localises to the kinetochore. The protein resides in the spindle. Its subcellular location is the cleavage furrow. It is found in the cytoplasmic vesicle membrane. Its function is as follows. Required for centrosome duplication and formation and function of the mitotic spindle. Essential for the development of the cerebral cortex. May regulate the production of neurons by controlling the orientation of the mitotic spindle during division of cortical neuronal progenitors of the proliferative ventricular zone of the brain. Orientation of the division plane perpendicular to the layers of the cortex gives rise to two proliferative neuronal progenitors whereas parallel orientation of the division plane yields one proliferative neuronal progenitor and a postmitotic neuron. A premature shift towards a neuronal fate within the progenitor population may result in an overall reduction in the final number of neurons and an increase in the number of neurons in the deeper layers of the cortex. Acts as a RAB9A/B effector that tethers RAB9-associated late endosomes to the dynein motor for their retrograde transport to the trans-Golgi network. The sequence is that of Nuclear distribution protein nudE homolog 1 from Homo sapiens (Human).